A 582-amino-acid chain; its full sequence is Threonine--tRNA ligase (582 aa).

The interval 185-478 is catalytic; it reads DHRKLGKELE…LTEQYGGAFP (294 aa). Positions 278, 329, and 455 each coordinate Zn(2+).

This sequence belongs to the class-II aminoacyl-tRNA synthetase family. As to quaternary structure, homodimer. It depends on Zn(2+) as a cofactor.

The protein localises to the cytoplasm. It carries out the reaction tRNA(Thr) + L-threonine + ATP = L-threonyl-tRNA(Thr) + AMP + diphosphate + H(+). Catalyzes the attachment of threonine to tRNA(Thr) in a two-step reaction: L-threonine is first activated by ATP to form Thr-AMP and then transferred to the acceptor end of tRNA(Thr). Also edits incorrectly charged L-seryl-tRNA(Thr). This Dehalococcoides mccartyi (strain ATCC BAA-2100 / JCM 16839 / KCTC 5957 / BAV1) protein is Threonine--tRNA ligase.